A 474-amino-acid chain; its full sequence is MRIGMRLLLGYFLLVAVAAWFVLAIFVKEVKPGVRRATEGTLIDTATLLAELARPDLLSGDPTHGQLAQAFNQLQHRPFRANIGGINKVRNEYHVYMTDAQGKVLFDSANKAVGQDYSRWNDVWLTLRGQYGARSTLQNPADPESSVMYVAAPIMDGSRLIGVLSVGKPNAAMAPVIKRSERRILWASAILLGIALVIGAGMVWWINRSIARLTRYADSVTDNKPVPLPDLGSSELRKLAQALESMRVKLEGKNYIEQYVYALTHELKSPLAAIRGAAEILREGPPPEVVARFTDNILTQNARMQALVETLLRQARLENRQEVVLTAVDVAALFRRVSEARTVQLAEKKITLHVTPTEVNVAAEPALLEQALGNLLDNAIDFTPESGCITLSAEVDQEHVTLKVLDTGSGIPDYALSRIFERFYSLPRANGQKSSGLGLAFVSEVARLFNGEVTLRNVQEGGVLASLRLHRHFT.

Residues 1-6 (MRIGMR) are Periplasmic-facing. A helical transmembrane segment spans residues 7–27 (LLLGYFLLVAVAAWFVLAIFV). Over 28–146 (KEVKPGVRRA…LQNPADPESS (119 aa)) the chain is Cytoplasmic. The helical transmembrane segment at 147–167 (VMYVAAPIMDGSRLIGVLSVG) threads the bilayer. Topologically, residues 168-183 (KPNAAMAPVIKRSERR) are periplasmic. A helical membrane pass occupies residues 184–204 (ILWASAILLGIALVIGAGMVW). The HAMP domain occupies 205–255 (WINRSIARLTRYADSVTDNKPVPLPDLGSSELRKLAQALESMRVKLEGKNY). Residues 205–474 (WINRSIARLT…ASLRLHRHFT (270 aa)) are Cytoplasmic-facing. The 212-residue stretch at 262–473 (ALTHELKSPL…LASLRLHRHF (212 aa)) folds into the Histidine kinase domain. Residue H265 is modified to Phosphohistidine; by autocatalysis.

Autophosphorylated.

The protein localises to the cell inner membrane. It catalyses the reaction ATP + protein L-histidine = ADP + protein N-phospho-L-histidine.. In terms of biological role, member of the two-component regulatory system CreC/CreB involved in catabolic regulation. CreC may function as a membrane-associated protein kinase that phosphorylates CreB in response to environmental signals. CreC can also phosphorylate PhoB. The polypeptide is Sensor protein CreC (creC) (Escherichia coli (strain K12)).